A 203-amino-acid chain; its full sequence is SPbeta prophage-derived uncharacterized lipoprotein YonS (203 aa).

An N-terminal signal peptide occupies residues 1–21 (MKLFKKLGILLLITSLILLAA). Cys22 carries N-palmitoyl cysteine lipidation. A lipid anchor (S-diacylglycerol cysteine) is attached at Cys22. A compositionally biased stretch (low complexity) spans 27–46 (ESSSSSEDTNNATDTNTSES). The disordered stretch occupies residues 27 to 57 (ESSSSSEDTNNATDTNTSESQDISVNGPEKV).

Its subcellular location is the cell membrane. This chain is SPbeta prophage-derived uncharacterized lipoprotein YonS (yonS), found in Bacillus subtilis (strain 168).